A 180-amino-acid chain; its full sequence is Adipocyte-related X-chromosome expressed sequence 1 (180 aa).

Residues 1–11 (MNSLLSRANSL) lie on the Cytoplasmic side of the membrane. Residues 12–32 (FAFTLSVMAALTLGCILTTAF) form a helical; Signal-anchor for type II membrane protein membrane-spanning segment. Topologically, residues 33–180 (KDRSAPVRLH…PDSYEIATTF (148 aa)) are lumenal. Asn141 carries N-linked (GlcNAc...) asparagine glycosylation.

This sequence belongs to the SPCS3 family. In terms of tissue distribution, strongly expressed in epididymal white and brown adipose tissue with low levels in heart.

It is found in the endoplasmic reticulum membrane. Its function is as follows. Plays a role in adipogenesis. The polypeptide is Adipocyte-related X-chromosome expressed sequence 1 (Mus musculus (Mouse)).